The following is a 139-amino-acid chain: Small ribosomal subunit protein uS11 (139 aa).

The segment covering Met1–Thr13 has biased composition (low complexity). The tract at residues Met1 to Gln30 is disordered. The span at Lys14–Lys23 shows a compositional bias: basic residues.

This sequence belongs to the universal ribosomal protein uS11 family. As to quaternary structure, part of the 30S ribosomal subunit. Interacts with proteins S7 and S18. Binds to IF-3.

Its function is as follows. Located on the platform of the 30S subunit, it bridges several disparate RNA helices of the 16S rRNA. Forms part of the Shine-Dalgarno cleft in the 70S ribosome. This is Small ribosomal subunit protein uS11 from Roseiflexus sp. (strain RS-1).